Here is a 344-residue protein sequence, read N- to C-terminus: Ferrochelatase (344 aa).

Fe cation-binding residues include histidine 214 and glutamate 295.

It belongs to the ferrochelatase family.

It is found in the cytoplasm. The enzyme catalyses heme b + 2 H(+) = protoporphyrin IX + Fe(2+). The protein operates within porphyrin-containing compound metabolism; protoheme biosynthesis; protoheme from protoporphyrin-IX: step 1/1. Catalyzes the ferrous insertion into protoporphyrin IX. The protein is Ferrochelatase of Rhizobium etli (strain CIAT 652).